The primary structure comprises 557 residues: Potassium-transporting ATPase potassium-binding subunit (557 aa).

A run of 12 helical transmembrane segments spans residues 5-25 (GFLL…PLGS), 63-83 (LSAI…MLLG), 132-152 (GLTV…FALI), 170-190 (LLRI…LFFI), 253-273 (FVQM…FGEV), 283-303 (LLWA…WAEV), 329-349 (VLVS…AVIA), 356-376 (ALGG…FGGV), 379-399 (GLYG…LMIG), 416-436 (LTAL…ALAM), 484-504 (LLAL…MAIA), and 526-546 (LFVG…FIPA).

Belongs to the KdpA family. The system is composed of three essential subunits: KdpA, KdpB and KdpC.

The protein resides in the cell inner membrane. In terms of biological role, part of the high-affinity ATP-driven potassium transport (or Kdp) system, which catalyzes the hydrolysis of ATP coupled with the electrogenic transport of potassium into the cytoplasm. This subunit binds the periplasmic potassium ions and delivers the ions to the membrane domain of KdpB through an intramembrane tunnel. This chain is Potassium-transporting ATPase potassium-binding subunit, found in Escherichia coli (strain UTI89 / UPEC).